The primary structure comprises 208 residues: MAKNYYDITLAMAGISQTARLVQQLAHEGQCDREAFHTSLSSLLQMDPPSTLAVFGGEERNLKMGLETLMGVLNANNKGLAAELTRYTISLMVLERKLNANKQAMNQLGERLGQLERQLAHFDLESDTIISALAGIYVDVVSPLGPRIQVTGSPAILQNPQVQAKVRAALLAGIRAAVLWQQVGGSRLQLMFSRNRLFKQAQNIVAHC.

Residues 91-125 (LMVLERKLNANKQAMNQLGERLGQLERQLAHFDLE) adopt a coiled-coil conformation.

The protein belongs to the HflD family.

Its subcellular location is the cytoplasm. The protein resides in the cell inner membrane. The sequence is that of High frequency lysogenization protein HflD homolog from Serratia proteamaculans (strain 568).